A 95-amino-acid polypeptide reads, in one-letter code: Cliotide T1 (95 aa).

A cross-link (cyclopeptide (Gly-Asn)) is located at residues 1–30; the sequence is GIPCGESCVFIPCITGAIGCSCKSKVCYRN. Intrachain disulfides connect Cys-4-Cys-20, Cys-8-Cys-22, and Cys-13-Cys-27. Residues 31–95 constitute a propeptide, removed in mature form; sequence HVIAAEAKTM…KDHLKMSITN (65 aa).

Post-translationally, contains 3 disulfide bonds. In terms of processing, this is a cyclic peptide. As to expression, expressed in flower, stem, shoot, root, leaf, seed, pod and nodule (at protein level).

Functionally, probably participates in a plant defense mechanism. Active against Gram-negative bacteria E.coli ATCC 700926 (MIC=1.1 uM), K.pneumoniae ATTC 13883 (MIC=2.7 uM) and P.aeruginosa ATCC 39018 (MIC=4.7 uM). Has hemolytic and cytotoxic activity. The protein is Cliotide T1 of Clitoria ternatea (Butterfly pea).